Reading from the N-terminus, the 425-residue chain is Glutamyl-tRNA reductase (425 aa).

Substrate is bound by residues 49 to 52, S107, 112 to 114, and Q118; these read TCNR and EPQ. The Nucleophile role is filled by C50. 187-192 provides a ligand contact to NADP(+); sequence GAGETI.

This sequence belongs to the glutamyl-tRNA reductase family. In terms of assembly, homodimer.

It carries out the reaction (S)-4-amino-5-oxopentanoate + tRNA(Glu) + NADP(+) = L-glutamyl-tRNA(Glu) + NADPH + H(+). Its pathway is porphyrin-containing compound metabolism; protoporphyrin-IX biosynthesis; 5-aminolevulinate from L-glutamyl-tRNA(Glu): step 1/2. Catalyzes the NADPH-dependent reduction of glutamyl-tRNA(Glu) to glutamate 1-semialdehyde (GSA). The polypeptide is Glutamyl-tRNA reductase (Pseudomonas savastanoi pv. phaseolicola (strain 1448A / Race 6) (Pseudomonas syringae pv. phaseolicola (strain 1448A / Race 6))).